A 136-amino-acid polypeptide reads, in one-letter code: Histone H3.3 (136 aa).

Residues 1-45 (MARTKQTARKSTGGKAPRKQLASKAARKAAPATGGVKKPHRYRPP) are disordered. Residue K5 is modified to N6,N6,N6-trimethyllysine; alternate. K5 carries the N6,N6-dimethyllysine; alternate modification. An N6-methyllysine; alternate mark is found at K5 and K10. K10 is subject to N6-acetyllysine; alternate. Position 11 is a phosphoserine (S11). K15 is modified (N6,N6-dimethyllysine; alternate). K15, K19, K24, K28, and K37 each carry N6-acetyllysine; alternate. Residues K19, K24, K28, and K37 each carry the N6-methyllysine; alternate modification. Residues 19–32 (KQLASKAARKAAPA) show a composition bias toward low complexity. An N6,N6,N6-trimethyllysine; alternate mark is found at K28 and K37. An N6,N6-dimethyllysine; alternate mark is found at K28 and K37. An N6-acetyllysine mark is found at K57 and K65. Residue K80 is modified to N6,N6,N6-trimethyllysine; alternate. The residue at position 80 (K80) is an N6,N6-dimethyllysine; alternate. Residue K80 is modified to N6-methyllysine; alternate. Residue K123 is modified to N6-acetyllysine.

It belongs to the histone H3 family. In terms of assembly, the nucleosome is a histone octamer containing two molecules each of H2A, H2B, H3 and H4 assembled in one H3-H4 heterotetramer and two H2A-H2B heterodimers. The octamer wraps approximately 147 bp of DNA. Post-translationally, phosphorylated by ark1 to form H3S10ph in a cell cycle-dependent manner during mitosis and meiosis. H3S10ph is also formed by ssp2, promotes subsequent H3K14ac formation by gcn5, and is required for transcriptional activation through TBP recruitment to the promoters. Dephosphorylation is performed by sds21. Mono-, di- and trimethylated by the COMPASS complex to form H3K4me1/2/3. H3K4me activates gene expression by regulating transcription elongation and plays a role in telomere length maintenance. H3K4me enrichment correlates with transcription levels, and occurs in a 5' to 3' gradient with H3K4me3 enrichment at the 5'-end of genes, shifting to H3K4me2 and then H3K4me1. Methylated by clr4 to form H3K9me1. H3K9me1 represents a specific tag for epigenetic transcriptional repression by recruiting swi6/HP1 to methylated histones. Targeting to histone probably involves clr3 and rik1. Essential for silencing of centromeres and directional switching of the mating type. Methylated by set2 to form H3K36me. H3K36me represses gene expression. Methylated by dot1 to form H3K79me. H3K79me is required for association of SIR proteins with telomeric regions and for telomeric silencing. The COMPASS-mediated formation of H3K4me2/3 and the dot1-mediated formation of H3K79me require H2BK123ub1. In terms of processing, acetylation of histone H3 leads to transcriptional activation. H3K14ac formation by gcn5 is promoted by H3S10ph. H3K14ac can also be formed by esa1. H3K56ac formation occurs predominantly in newly synthesized H3 molecules during G1, S and G2/M of the cell cycle and may be involved in DNA repair. Acetylation at Lys-123 (H3K122ac) plays a central role in chromatin structure: localizes at the surface of the histone octamer and stimulates transcription, possibly by promoting nucleosome instability.

It localises to the nucleus. It is found in the chromosome. Functionally, core component of nucleosome. Nucleosomes wrap and compact DNA into chromatin, limiting DNA accessibility to the cellular machineries which require DNA as a template. Histones thereby play a central role in transcription regulation, DNA repair, DNA replication and chromosomal stability. DNA accessibility is regulated via a complex set of post-translational modifications of histones, also called histone code, and nucleosome remodeling. The chain is Histone H3.3 (hht3) from Schizosaccharomyces pombe (strain 972 / ATCC 24843) (Fission yeast).